A 467-amino-acid chain; its full sequence is Pup--protein ligase (467 aa).

Glu-12 lines the Mg(2+) pocket. Arg-56 serves as a coordination point for ATP. Tyr-58 lines the Mg(2+) pocket. The Proton acceptor role is filled by Asp-60. Glu-66 contributes to the Mg(2+) binding site. ATP-binding residues include Thr-69 and Trp-431.

It belongs to the Pup ligase/Pup deamidase family. Pup-conjugating enzyme subfamily.

The enzyme catalyses ATP + [prokaryotic ubiquitin-like protein]-L-glutamate + [protein]-L-lysine = ADP + phosphate + N(6)-([prokaryotic ubiquitin-like protein]-gamma-L-glutamyl)-[protein]-L-lysine.. Its pathway is protein degradation; proteasomal Pup-dependent pathway. The protein operates within protein modification; protein pupylation. Functionally, catalyzes the covalent attachment of the prokaryotic ubiquitin-like protein modifier Pup to the proteasomal substrate proteins, thereby targeting them for proteasomal degradation. This tagging system is termed pupylation. The ligation reaction involves the side-chain carboxylate of the C-terminal glutamate of Pup and the side-chain amino group of a substrate lysine. The chain is Pup--protein ligase from Corynebacterium jeikeium (strain K411).